Reading from the N-terminus, the 118-residue chain is Large ribosomal subunit protein eL18 (118 aa).

This sequence belongs to the eukaryotic ribosomal protein eL18 family.

The sequence is that of Large ribosomal subunit protein eL18 (rpl18e) from Sulfolobus acidocaldarius (strain ATCC 33909 / DSM 639 / JCM 8929 / NBRC 15157 / NCIMB 11770).